The chain runs to 262 residues: Acyl-[acyl-carrier-protein]--UDP-N-acetylglucosamine O-acyltransferase (262 aa).

Belongs to the transferase hexapeptide repeat family. LpxA subfamily. In terms of assembly, homotrimer.

It is found in the cytoplasm. The enzyme catalyses a (3R)-hydroxyacyl-[ACP] + UDP-N-acetyl-alpha-D-glucosamine = a UDP-3-O-[(3R)-3-hydroxyacyl]-N-acetyl-alpha-D-glucosamine + holo-[ACP]. It functions in the pathway glycolipid biosynthesis; lipid IV(A) biosynthesis; lipid IV(A) from (3R)-3-hydroxytetradecanoyl-[acyl-carrier-protein] and UDP-N-acetyl-alpha-D-glucosamine: step 1/6. In terms of biological role, involved in the biosynthesis of lipid A, a phosphorylated glycolipid that anchors the lipopolysaccharide to the outer membrane of the cell. This chain is Acyl-[acyl-carrier-protein]--UDP-N-acetylglucosamine O-acyltransferase, found in Salmonella paratyphi B (strain ATCC BAA-1250 / SPB7).